Here is a 111-residue protein sequence, read N- to C-terminus: U-scoloptoxin(16)-Sm2a (111 aa).

Residues 1–28 (MCAKPNHLFVTVTFIFGFAVCIVQISAW) form the signal peptide.

This sequence belongs to the scoloptoxin-16 family. In terms of processing, contains 4 disulfide bonds. As to expression, expressed by the venom gland.

Its subcellular location is the secreted. This Scolopendra morsitans (Tanzanian blue ringleg centipede) protein is U-scoloptoxin(16)-Sm2a.